A 48-amino-acid chain; its full sequence is Large ribosomal subunit protein bL34c (48 aa).

Belongs to the bacterial ribosomal protein bL34 family.

The protein localises to the plastid. It localises to the chloroplast. This Thalassiosira pseudonana (Marine diatom) protein is Large ribosomal subunit protein bL34c.